Here is a 530-residue protein sequence, read N- to C-terminus: TNF receptor-associated factor family protein DDB_G0272829 (530 aa).

The segment at 35–81 (CQICEGLLISSLIPNRMKALQCINGHCFCLTCWESILEIKSECPTCR) adopts an RING-type; degenerate zinc-finger fold. 2 TRAF-type zinc fingers span residues 134–188 (RHES…KQMQ) and 189–246 (GHIL…NDND). Disordered stretches follow at residues 242 to 267 (NNDN…LSSS), 391 to 432 (TTTT…DNQG), and 483 to 530 (FNQL…GTSL). Composition is skewed to low complexity over residues 253-267 (NNSN…LSSS), 391-415 (TTTT…NNNN), and 485-502 (QLSQ…SQSL). Residues 361–422 (ILEHQQQQNQ…NNNNEDEEDD (62 aa)) are a coiled coil. A compositionally biased stretch (polar residues) spans 509–530 (ITINQNQNTPSNPFSIFSGTSL).

Belongs to the TNF receptor-associated factor family.

It localises to the cytoplasm. Probable adapter protein and signal transducer that links members of the tumor necrosis factor receptor family to different signaling pathways by association with the receptor cytoplasmic domain and kinases. The polypeptide is TNF receptor-associated factor family protein DDB_G0272829 (Dictyostelium discoideum (Social amoeba)).